A 308-amino-acid chain; its full sequence is uncharacterized protein (308 aa).

This is an uncharacterized protein from Bos taurus (Bovine).